The sequence spans 953 residues: Lysosomal alpha-glucosidase (953 aa).

Residues 1–27 form the signal peptide; sequence MNIRKPLCSNSVVGACTLVSLTTAVIL. A propeptide spanning residues 28–69 is cleaved from the precursor; the sequence is GHLMLRELMLLPQDLHESSSGLWKTYRPHHQESYEPAPLHIQ. Residues 80 to 131 enclose the P-type domain; that stretch reads TQCDVTPNSRFDCAPDKGITQEQCEARGCCWVPAGQVLNGPVMGQPWCFFPP. Cystine bridges form between C82–C109, C92–C108, and C103–C127. N-linked (GlcNAc...) asparagine glycosylation is found at N140, N233, and N390. Position 404 (D404) interacts with substrate. The N-linked (GlcNAc...) asparagine glycan is linked to N470. D518 serves as the catalytic Nucleophile. Residue E521 is part of the active site. An intrachain disulfide couples C533 to C558. R600 and D616 together coordinate substrate. A disulfide bridge links C647 with C658. N652 carries N-linked (GlcNAc...) asparagine glycosylation. Residue H674 participates in substrate binding. N-linked (GlcNAc...) asparagine glycans are attached at residues N883 and N926.

Belongs to the glycosyl hydrolase 31 family.

The protein resides in the lysosome. The protein localises to the lysosome membrane. The enzyme catalyses Hydrolysis of terminal, non-reducing (1-&gt;4)-linked alpha-D-glucose residues with release of alpha-D-glucose.. Essential for the degradation of glycogen in lysosomes. Has highest activity on alpha-1,4-linked glycosidic linkages, but can also hydrolyze alpha-1,6-linked glucans. The protein is Lysosomal alpha-glucosidase (Gaa) of Rattus norvegicus (Rat).